The primary structure comprises 224 residues: 2-C-methyl-D-erythritol 4-phosphate cytidylyltransferase (224 aa).

This sequence belongs to the IspD/TarI cytidylyltransferase family. IspD subfamily.

It catalyses the reaction 2-C-methyl-D-erythritol 4-phosphate + CTP + H(+) = 4-CDP-2-C-methyl-D-erythritol + diphosphate. Its pathway is isoprenoid biosynthesis; isopentenyl diphosphate biosynthesis via DXP pathway; isopentenyl diphosphate from 1-deoxy-D-xylulose 5-phosphate: step 2/6. Its function is as follows. Catalyzes the formation of 4-diphosphocytidyl-2-C-methyl-D-erythritol from CTP and 2-C-methyl-D-erythritol 4-phosphate (MEP). In Bordetella petrii (strain ATCC BAA-461 / DSM 12804 / CCUG 43448), this protein is 2-C-methyl-D-erythritol 4-phosphate cytidylyltransferase.